Here is a 75-residue protein sequence, read N- to C-terminus: 8.9 kDa basic protein (75 aa).

The protein is 8.9 kDa basic protein (P8.9) of Orgyia pseudotsugata (Douglas-fir tussock moth).